We begin with the raw amino-acid sequence, 600 residues long: Aspartate--tRNA(Asp/Asn) ligase (600 aa).

Glu187 lines the L-aspartate pocket. The aspartate stretch occupies residues 211-214; the sequence is QIFK. Positions 233 and 463 each coordinate L-aspartate. 233–235 lines the ATP pocket; the sequence is RDE. Glu497 is an ATP binding site. Arg504 is an L-aspartate binding site. An ATP-binding site is contributed by 549–552; that stretch reads GVDR.

This sequence belongs to the class-II aminoacyl-tRNA synthetase family. Type 1 subfamily. In terms of assembly, homodimer.

It localises to the cytoplasm. It carries out the reaction tRNA(Asx) + L-aspartate + ATP = L-aspartyl-tRNA(Asx) + AMP + diphosphate. In terms of biological role, aspartyl-tRNA synthetase with relaxed tRNA specificity since it is able to aspartylate not only its cognate tRNA(Asp) but also tRNA(Asn). Reaction proceeds in two steps: L-aspartate is first activated by ATP to form Asp-AMP and then transferred to the acceptor end of tRNA(Asp/Asn). This is Aspartate--tRNA(Asp/Asn) ligase from Wolbachia pipientis subsp. Culex pipiens (strain wPip).